A 321-amino-acid polypeptide reads, in one-letter code: tRNA-dihydrouridine synthase B (321 aa).

Residues 16-18 (PMA) and glutamine 70 each bind FMN. The active-site Proton donor is cysteine 100. FMN is bound by residues lysine 139, 200–202 (NGD), and 224–225 (GR).

The protein belongs to the Dus family. DusB subfamily. FMN serves as cofactor.

The catalysed reaction is a 5,6-dihydrouridine in tRNA + NAD(+) = a uridine in tRNA + NADH + H(+). The enzyme catalyses a 5,6-dihydrouridine in tRNA + NADP(+) = a uridine in tRNA + NADPH + H(+). Functionally, catalyzes the synthesis of 5,6-dihydrouridine (D), a modified base found in the D-loop of most tRNAs, via the reduction of the C5-C6 double bond in target uridines. In Shigella flexneri, this protein is tRNA-dihydrouridine synthase B.